The primary structure comprises 418 residues: Tyrosine--tRNA ligase (418 aa).

Tyr38 is an L-tyrosine binding site. A 'HIGH' region motif is present at residues 43-52 (CTAKSLHVGS). Tyr175 and Gln179 together coordinate L-tyrosine. A 'KMSKS' region motif is present at residues 235–239 (KMGKT). Lys238 is a binding site for ATP. In terms of domain architecture, S4 RNA-binding spans 348–413 (LPIIKLLQMC…CGKKRHLKVM (66 aa)).

The protein belongs to the class-I aminoacyl-tRNA synthetase family. TyrS type 1 subfamily. Homodimer.

Its subcellular location is the cytoplasm. It carries out the reaction tRNA(Tyr) + L-tyrosine + ATP = L-tyrosyl-tRNA(Tyr) + AMP + diphosphate + H(+). In terms of biological role, catalyzes the attachment of tyrosine to tRNA(Tyr) in a two-step reaction: tyrosine is first activated by ATP to form Tyr-AMP and then transferred to the acceptor end of tRNA(Tyr). The chain is Tyrosine--tRNA ligase from Ehrlichia chaffeensis (strain ATCC CRL-10679 / Arkansas).